Consider the following 705-residue polypeptide: Ion-translocating oxidoreductase complex subunit C (705 aa).

2 4Fe-4S ferredoxin-type domains span residues 368-397 (MGET…QQLY) and 407-435 (KATA…LVQY). [4Fe-4S] cluster contacts are provided by Cys-377, Cys-380, Cys-383, Cys-387, Cys-416, Cys-419, Cys-422, and Cys-426. Residues 536-684 (RARQAENIPA…EPVDPRKAAV (149 aa)) are disordered.

Belongs to the 4Fe4S bacterial-type ferredoxin family. RnfC subfamily. As to quaternary structure, the complex is composed of six subunits: RnfA, RnfB, RnfC, RnfD, RnfE and RnfG. It depends on [4Fe-4S] cluster as a cofactor.

The protein localises to the cell inner membrane. Functionally, part of a membrane-bound complex that couples electron transfer with translocation of ions across the membrane. This Citrobacter koseri (strain ATCC BAA-895 / CDC 4225-83 / SGSC4696) protein is Ion-translocating oxidoreductase complex subunit C.